Reading from the N-terminus, the 310-residue chain is Ribosomal RNA small subunit methyltransferase H (310 aa).

S-adenosyl-L-methionine contacts are provided by residues 35-37 (GGH), aspartate 52, phenylalanine 79, aspartate 100, and glutamine 107.

This sequence belongs to the methyltransferase superfamily. RsmH family.

It localises to the cytoplasm. The catalysed reaction is cytidine(1402) in 16S rRNA + S-adenosyl-L-methionine = N(4)-methylcytidine(1402) in 16S rRNA + S-adenosyl-L-homocysteine + H(+). Functionally, specifically methylates the N4 position of cytidine in position 1402 (C1402) of 16S rRNA. This chain is Ribosomal RNA small subunit methyltransferase H, found in Anaeromyxobacter sp. (strain Fw109-5).